Here is a 477-residue protein sequence, read N- to C-terminus: Bifunctional protein HldE (477 aa).

The tract at residues methionine 1–threonine 318 is ribokinase. Asparagine 195–glutamate 198 serves as a coordination point for ATP. Aspartate 264 is an active-site residue. Residues methionine 344–lysine 477 are cytidylyltransferase.

It in the N-terminal section; belongs to the carbohydrate kinase PfkB family. In the C-terminal section; belongs to the cytidylyltransferase family. As to quaternary structure, homodimer.

The catalysed reaction is D-glycero-beta-D-manno-heptose 7-phosphate + ATP = D-glycero-beta-D-manno-heptose 1,7-bisphosphate + ADP + H(+). The enzyme catalyses D-glycero-beta-D-manno-heptose 1-phosphate + ATP + H(+) = ADP-D-glycero-beta-D-manno-heptose + diphosphate. Its pathway is nucleotide-sugar biosynthesis; ADP-L-glycero-beta-D-manno-heptose biosynthesis; ADP-L-glycero-beta-D-manno-heptose from D-glycero-beta-D-manno-heptose 7-phosphate: step 1/4. It functions in the pathway nucleotide-sugar biosynthesis; ADP-L-glycero-beta-D-manno-heptose biosynthesis; ADP-L-glycero-beta-D-manno-heptose from D-glycero-beta-D-manno-heptose 7-phosphate: step 3/4. Functionally, catalyzes the phosphorylation of D-glycero-D-manno-heptose 7-phosphate at the C-1 position to selectively form D-glycero-beta-D-manno-heptose-1,7-bisphosphate. Its function is as follows. Catalyzes the ADP transfer from ATP to D-glycero-beta-D-manno-heptose 1-phosphate, yielding ADP-D-glycero-beta-D-manno-heptose. The protein is Bifunctional protein HldE of Salmonella dublin (strain CT_02021853).